The sequence spans 155 residues: Desiccation-related protein clone PCC6-19 (155 aa).

The tract at residues methionine 1–histidine 155 is disordered. Composition is skewed to gly residues over residues alanine 27–glutamine 39 and glycine 47–glycine 76. The span at glycine 83–glutamate 92 shows a compositional bias: low complexity. Positions threonine 118–glutamine 135 are enriched in polar residues. Over residues glutamine 136 to histidine 155 the composition is skewed to basic and acidic residues.

This sequence belongs to the plant dehydrin family.

This chain is Desiccation-related protein clone PCC6-19, found in Craterostigma plantagineum (Blue gem).